A 209-amino-acid polypeptide reads, in one-letter code: Shikimate kinase (209 aa).

An ATP-binding site is contributed by 47 to 52 (GAGKTT). Residue Thr-51 coordinates Mg(2+). Residues Asp-69, Arg-93, and Gly-115 each contribute to the substrate site. Arg-153 serves as a coordination point for ATP. Arg-172 serves as a coordination point for substrate.

The protein belongs to the shikimate kinase family. In terms of assembly, monomer. Mg(2+) is required as a cofactor.

The protein resides in the cytoplasm. The catalysed reaction is shikimate + ATP = 3-phosphoshikimate + ADP + H(+). Its pathway is metabolic intermediate biosynthesis; chorismate biosynthesis; chorismate from D-erythrose 4-phosphate and phosphoenolpyruvate: step 5/7. In terms of biological role, catalyzes the specific phosphorylation of the 3-hydroxyl group of shikimic acid using ATP as a cosubstrate. The polypeptide is Shikimate kinase (Bordetella avium (strain 197N)).